The sequence spans 216 residues: Kynurenine formamidase (216 aa).

Trp-24 contributes to the substrate binding site. Residues His-54, His-58, and Asp-60 each contribute to the Zn(2+) site. The Proton donor/acceptor role is filled by His-64. The Zn(2+) site is built by His-164 and Glu-176.

This sequence belongs to the Cyclase 1 superfamily. KynB family. Homodimer. The cofactor is Zn(2+).

The catalysed reaction is N-formyl-L-kynurenine + H2O = L-kynurenine + formate + H(+). The protein operates within amino-acid degradation; L-tryptophan degradation via kynurenine pathway; L-kynurenine from L-tryptophan: step 2/2. Catalyzes the hydrolysis of N-formyl-L-kynurenine to L-kynurenine, the second step in the kynurenine pathway of tryptophan degradation. The polypeptide is Kynurenine formamidase (Erythrobacter litoralis (strain HTCC2594)).